A 333-amino-acid polypeptide reads, in one-letter code: 5-formaminoimidazole-4-carboxamide-1-(beta)-D-ribofuranosyl 5'-monophosphate synthetase (333 aa).

5-amino-1-(5-phospho-beta-D-ribosyl)imidazole-4-carboxamide contacts are provided by His-21 and Ser-84. The ATP-grasp domain occupies 118–313 (MELLAAAGIP…YFDEPMDMGE (196 aa)). ATP-binding positions include 141–187 (PVIV…VPAY) and Glu-209. Asn-229 is a binding site for 5-amino-1-(5-phospho-beta-D-ribosyl)imidazole-4-carboxamide. Mg(2+) is bound by residues Glu-268 and Glu-281.

This sequence belongs to the phosphohexose mutase family. Mg(2+) serves as cofactor. The cofactor is Mn(2+).

It carries out the reaction 5-amino-1-(5-phospho-beta-D-ribosyl)imidazole-4-carboxamide + formate + ATP = 5-formamido-1-(5-phospho-D-ribosyl)imidazole-4-carboxamide + ADP + phosphate. The protein operates within purine metabolism; IMP biosynthesis via de novo pathway; 5-formamido-1-(5-phospho-D-ribosyl)imidazole-4-carboxamide from 5-amino-1-(5-phospho-D-ribosyl)imidazole-4-carboxamide (formate route): step 1/1. Functionally, catalyzes the ATP- and formate-dependent formylation of 5-aminoimidazole-4-carboxamide-1-beta-d-ribofuranosyl 5'-monophosphate (AICAR) to 5-formaminoimidazole-4-carboxamide-1-beta-d-ribofuranosyl 5'-monophosphate (FAICAR) in the absence of folates. This chain is 5-formaminoimidazole-4-carboxamide-1-(beta)-D-ribofuranosyl 5'-monophosphate synthetase, found in Pyrobaculum calidifontis (strain DSM 21063 / JCM 11548 / VA1).